A 258-amino-acid chain; its full sequence is MFLKVHEIAFLFGLLGNIVSFGVFLSPVPTFYGIYKKKSSKGFQSIPYICALASATLLLYYGIMKTHAYLIISINTFGCFIEISYLFLYILYAPREAKISTLKLIVICNIGGLGLLILLVNLLVPKQHRVSTVGWVCAAYSLAVFASPLSVMRKVIKTKSVEYMPFLLSLSLTLNAVMWFFYGLLIKDKFIAMPNILGFLFGVAQMILYMMYQGSTKTDLPTENQLANKTDVNEVPIVAVELPDVGSDNVEGSVRPMK.

The Extracellular segment spans residues 1-7; the sequence is MFLKVHE. Residues 8–28 traverse the membrane as a helical segment; it reads IAFLFGLLGNIVSFGVFLSPV. Residues 10 to 96 form the MtN3/slv 1 domain; it reads FLFGLLGNIV…FLYILYAPRE (87 aa). Residues 29 to 42 lie on the Cytoplasmic side of the membrane; the sequence is PTFYGIYKKKSSKG. Residues 43 to 63 traverse the membrane as a helical segment; the sequence is FQSIPYICALASATLLLYYGI. Over 64-69 the chain is Extracellular; that stretch reads MKTHAY. Residues 70–90 traverse the membrane as a helical segment; sequence LIISINTFGCFIEISYLFLYI. The Cytoplasmic segment spans residues 91–103; sequence LYAPREAKISTLK. The helical transmembrane segment at 104 to 124 threads the bilayer; that stretch reads LIVICNIGGLGLLILLVNLLV. The Extracellular segment spans residues 125-131; the sequence is PKQHRVS. Residues 132–152 form a helical membrane-spanning segment; sequence TVGWVCAAYSLAVFASPLSVM. The region spanning 132 to 216 is the MtN3/slv 2 domain; it reads TVGWVCAAYS…ILYMMYQGST (85 aa). At 153 to 165 the chain is on the cytoplasmic side; sequence RKVIKTKSVEYMP. The helical transmembrane segment at 166 to 186 threads the bilayer; sequence FLLSLSLTLNAVMWFFYGLLI. Residues 187 to 189 lie on the Extracellular side of the membrane; the sequence is KDK. A helical transmembrane segment spans residues 190 to 210; sequence FIAMPNILGFLFGVAQMILYM. Residues 211–258 are Cytoplasmic-facing; sequence MYQGSTKTDLPTENQLANKTDVNEVPIVAVELPDVGSDNVEGSVRPMK.

This sequence belongs to the SWEET sugar transporter family. Forms heterooligomers with SWEET1, SWEET5, SWEET8, SWEET11, SWEET13, SWEET16 and SWEET17. As to expression, specifically expressed in nectaries, mostly in the lower half of nectary parenchyma.

It localises to the cell membrane. It is found in the cytoplasmic vesicle membrane. The protein resides in the golgi apparatus. The protein localises to the trans-Golgi network membrane. Mediates both low-affinity uptake and efflux of sugar across the plasma membrane. Nectary-specific sugar transporter required for nectar production by mediating the secretion of sucrose from the nectary parenchyma to the extracellular space. The chain is Bidirectional sugar transporter SWEET9 from Arabidopsis thaliana (Mouse-ear cress).